The chain runs to 415 residues: Serine hydroxymethyltransferase (415 aa).

(6S)-5,6,7,8-tetrahydrofolate is bound by residues leucine 121 and 125–127 (GHL). Position 230 is an N6-(pyridoxal phosphate)lysine (lysine 230). Position 355-357 (355-357 (SPF)) interacts with (6S)-5,6,7,8-tetrahydrofolate.

Belongs to the SHMT family. As to quaternary structure, homodimer. The cofactor is pyridoxal 5'-phosphate.

The protein resides in the cytoplasm. It catalyses the reaction (6R)-5,10-methylene-5,6,7,8-tetrahydrofolate + glycine + H2O = (6S)-5,6,7,8-tetrahydrofolate + L-serine. It functions in the pathway one-carbon metabolism; tetrahydrofolate interconversion. Its pathway is amino-acid biosynthesis; glycine biosynthesis; glycine from L-serine: step 1/1. Its function is as follows. Catalyzes the reversible interconversion of serine and glycine with tetrahydrofolate (THF) serving as the one-carbon carrier. This reaction serves as the major source of one-carbon groups required for the biosynthesis of purines, thymidylate, methionine, and other important biomolecules. Also exhibits THF-independent aldolase activity toward beta-hydroxyamino acids, producing glycine and aldehydes, via a retro-aldol mechanism. The polypeptide is Serine hydroxymethyltransferase (Lactococcus lactis subsp. cremoris (strain SK11)).